The chain runs to 169 residues: TPD1 protein homolog 1B (169 aa).

A signal peptide spans Met1–Ala25.

Expressed in roots, and at low levels in anthers during meiosis.

In terms of biological role, may play a role during anther development. In Oryza sativa subsp. japonica (Rice), this protein is TPD1 protein homolog 1B.